We begin with the raw amino-acid sequence, 237 residues long: Putative N-acetylmannosamine-6-phosphate 2-epimerase (237 aa).

This sequence belongs to the NanE family.

It catalyses the reaction an N-acyl-D-glucosamine 6-phosphate = an N-acyl-D-mannosamine 6-phosphate. It participates in amino-sugar metabolism; N-acetylneuraminate degradation; D-fructose 6-phosphate from N-acetylneuraminate: step 3/5. Converts N-acetylmannosamine-6-phosphate (ManNAc-6-P) to N-acetylglucosamine-6-phosphate (GlcNAc-6-P). This Listeria monocytogenes serotype 4a (strain HCC23) protein is Putative N-acetylmannosamine-6-phosphate 2-epimerase.